Consider the following 429-residue polypeptide: Enolase (429 aa).

Gln163 contributes to the (2R)-2-phosphoglycerate binding site. Glu205 functions as the Proton donor in the catalytic mechanism. Asp242, Glu286, and Asp313 together coordinate Mg(2+). The (2R)-2-phosphoglycerate site is built by Lys338, Arg367, Ser368, and Lys389. Lys338 serves as the catalytic Proton acceptor.

This sequence belongs to the enolase family. It depends on Mg(2+) as a cofactor.

It is found in the cytoplasm. It localises to the secreted. Its subcellular location is the cell surface. The enzyme catalyses (2R)-2-phosphoglycerate = phosphoenolpyruvate + H2O. The protein operates within carbohydrate degradation; glycolysis; pyruvate from D-glyceraldehyde 3-phosphate: step 4/5. In terms of biological role, catalyzes the reversible conversion of 2-phosphoglycerate (2-PG) into phosphoenolpyruvate (PEP). It is essential for the degradation of carbohydrates via glycolysis. This chain is Enolase, found in Geotalea uraniireducens (strain Rf4) (Geobacter uraniireducens).